The chain runs to 60 residues: uncharacterized protein (60 aa).

Residues 1–21 form the signal peptide; that stretch reads MNKLLKLFFITIIIYNNIAFA.

This is an uncharacterized protein from Rickettsia prowazekii (strain Madrid E).